The chain runs to 277 residues: 3-methyl-2-oxobutanoate hydroxymethyltransferase (277 aa).

Positions 53 and 96 each coordinate Mg(2+). Residues 53 to 54 (DS), D96, and K126 contribute to the 3-methyl-2-oxobutanoate site. E128 provides a ligand contact to Mg(2+). E195 (proton acceptor) is an active-site residue.

The protein belongs to the PanB family. In terms of assembly, homodecamer; pentamer of dimers. It depends on Mg(2+) as a cofactor.

It localises to the cytoplasm. It catalyses the reaction 3-methyl-2-oxobutanoate + (6R)-5,10-methylene-5,6,7,8-tetrahydrofolate + H2O = 2-dehydropantoate + (6S)-5,6,7,8-tetrahydrofolate. Its pathway is cofactor biosynthesis; (R)-pantothenate biosynthesis; (R)-pantoate from 3-methyl-2-oxobutanoate: step 1/2. In terms of biological role, catalyzes the reversible reaction in which hydroxymethyl group from 5,10-methylenetetrahydrofolate is transferred onto alpha-ketoisovalerate to form ketopantoate. This Chlorobium luteolum (strain DSM 273 / BCRC 81028 / 2530) (Pelodictyon luteolum) protein is 3-methyl-2-oxobutanoate hydroxymethyltransferase.